The sequence spans 1254 residues: Histone-lysine N-methyltransferase eggless (1254 aa).

2 disordered regions span residues 24-209 and 228-248; these read ALVE…EIPR and PVPR…SKTT. 2 stretches are compositionally biased toward basic and acidic residues: residues 40 to 57 and 65 to 81; these read TPEK…KDLT and KSQE…KDPE. The span at 112–125 shows a compositional bias: low complexity; it reads SVELLESPLKSPSS. Residues 136–162 show a composition bias toward basic and acidic residues; it reads LEEKEKPGPAKELEPKESEPDSKESSK. The span at 172–181 shows a compositional bias: polar residues; that stretch reads ELISSPTSDD. 2 stretches are compositionally biased toward basic and acidic residues: residues 182-197 and 234-243; these read SLAK…EHGQ and AMQESKETQK. Positions 391 to 416 form a coiled coil; that stretch reads TILQAKIERLAKKFEEVDLQLAQVQG. Tudor domains follow at residues 535-607 and 634-691; these read RLPI…SEKV and QCTK…KETQ. Residues 734 to 760 are disordered; it reads ARKSTSKSGSPASTAAPPTGSSSSSAV. A compositionally biased stretch (low complexity) spans 739–759; the sequence is SKSGSPASTAAPPTGSSSSSA. The 67-residue stretch at 811-877 folds into the MBD domain; sequence LDSYSPLSKP…DNFDFTPDLR (67 aa). The region spanning 939-1011 is the Pre-SET domain; the sequence is VCCDCEDDCS…NCLNRVVQHS (73 aa). Zn(2+) is bound by residues Cys-941, Cys-943, Cys-947, Cys-953, Cys-955, Cys-993, Cys-997, Cys-999, and Cys-1003. The SET domain maps to 1014–1229; it reads MKLQVFKTSN…SGTELTWNYN (216 aa). Residues 1024-1026, Asp-1062, and Tyr-1064 contribute to the S-adenosyl-L-methionine site; that span reads RGW. Positions 1081 to 1090 are enriched in basic and acidic residues; the sequence is YESDVERADL. Residues 1081 to 1139 form a disordered region; it reads YESDVERADLDHEDDNYGPDAEDDDDFRPNNYYQKKKEKLRSSRSNSSSTQNTELDSQE. Over residues 1091-1106 the composition is skewed to acidic residues; it reads DHEDDNYGPDAEDDDD. Over residues 1123–1134 the composition is skewed to low complexity; the sequence is SRSNSSSTQNTE. Residues Arg-1183 and 1186-1187 each bind S-adenosyl-L-methionine; that span reads NH. Zn(2+)-binding residues include Cys-1189, Cys-1242, Cys-1244, and Cys-1249. Residues 1238–1254 enclose the Post-SET domain; sequence KVLYCQCGAQNCRVRLL.

The protein belongs to the class V-like SAM-binding methyltransferase superfamily. Histone-lysine methyltransferase family. Suvar3-9 subfamily.

It is found in the nucleus. It localises to the chromosome. It carries out the reaction L-lysyl(9)-[histone H3] + 3 S-adenosyl-L-methionine = N(6),N(6),N(6)-trimethyl-L-lysyl(9)-[histone H3] + 3 S-adenosyl-L-homocysteine + 3 H(+). In terms of biological role, histone methyltransferase that specifically trimethylates 'Lys-9' of histone H3 in ovary. H3 'Lys-9' trimethylation represents a specific tag for epigenetic transcriptional repression by recruiting Su(var)205/HP1 to methylated histones. Plays a central role during oogenesis. This Drosophila pseudoobscura pseudoobscura (Fruit fly) protein is Histone-lysine N-methyltransferase eggless (egg).